Here is a 550-residue protein sequence, read N- to C-terminus: Chaperonin GroEL 1 (550 aa).

ATP is bound by residues 29 to 32 (TIGP), 86 to 90 (DGTTT), glycine 413, 477 to 479 (NAA), and aspartate 493. The tract at residues 524–550 (AVSDGDHGHSHGHGHSHGHSHPQGPGF) is disordered. Basic residues predominate over residues 533-543 (SHGHGHSHGHS).

The protein belongs to the chaperonin (HSP60) family. Forms a cylinder of 14 subunits composed of two heptameric rings stacked back-to-back. Interacts with the co-chaperonin GroES.

The protein localises to the cytoplasm. It carries out the reaction ATP + H2O + a folded polypeptide = ADP + phosphate + an unfolded polypeptide.. Functionally, together with its co-chaperonin GroES, plays an essential role in assisting protein folding. The GroEL-GroES system forms a nano-cage that allows encapsulation of the non-native substrate proteins and provides a physical environment optimized to promote and accelerate protein folding. The chain is Chaperonin GroEL 1 from Frankia alni (strain DSM 45986 / CECT 9034 / ACN14a).